Reading from the N-terminus, the 622-residue chain is Mitochondrial distribution and morphology protein 34 (622 aa).

One can recognise an SMP-LTD domain in the interval 1-195; sequence MAFNFNWSPL…LPAIIHRLSL (195 aa). Disordered regions lie at residues 211–234, 303–322, 355–432, 445–464, 482–546, and 581–622; these read QVTNPPLEGPGLDPLLNPPEDPVD, PSGLVSPMSPPLSRTHSHVA, SMGA…IRQP, ERNARRGIPAEFGHDIPASR, SLQQ…QTHL, and KMGG…AYRH. Residues 214-225 are compositionally biased toward low complexity; sequence NPPLEGPGLDPL. Residues 360–372 show a composition bias toward basic residues; the sequence is RHSKAHARKRKKR. A compositionally biased stretch (basic and acidic residues) spans 373–384; that stretch reads VVDLRRRPKNTD. Over residues 388–404 the composition is skewed to low complexity; sequence SVSGESEFTESTSAASV. Polar residues-rich tracts occupy residues 482-495 and 522-532; these read SLQQQLHPANSKSL and NASNYTSSGDS. Low complexity-rich tracts occupy residues 533-543 and 592-601; these read QQQQQQQQQHQ and NNKNDNKNNN.

Belongs to the MDM34 family. As to quaternary structure, component of the ER-mitochondria encounter structure (ERMES) or MDM complex, composed of MMM1, MDM10, MDM12 and MDM34.

It is found in the mitochondrion outer membrane. Its function is as follows. Component of the ERMES/MDM complex, which serves as a molecular tether to connect the endoplasmic reticulum (ER) and mitochondria. Components of this complex are involved in the control of mitochondrial shape and protein biogenesis, and function in nonvesicular lipid trafficking between the ER and mitochondria. MDM34 is required for the interaction of the ER-resident membrane protein MMM1 and the outer mitochondrial membrane-resident beta-barrel protein MDM10. The protein is Mitochondrial distribution and morphology protein 34 of Ajellomyces capsulatus (strain G186AR / H82 / ATCC MYA-2454 / RMSCC 2432) (Darling's disease fungus).